Here is a 257-residue protein sequence, read N- to C-terminus: Phosphonates import ATP-binding protein PhnC (257 aa).

An ABC transporter domain is found at 2-246 (IEFRNVSKVY…KFAEIYGDVA (245 aa)). Residue 35 to 42 (GLSGAGKS) coordinates ATP.

Belongs to the ABC transporter superfamily. Phosphonates importer (TC 3.A.1.9.1) family. The complex is composed of two ATP-binding proteins (PhnC), two transmembrane proteins (PhnE) and a solute-binding protein (PhnD).

It localises to the cell membrane. The catalysed reaction is phosphonate(out) + ATP + H2O = phosphonate(in) + ADP + phosphate + H(+). Functionally, part of the ABC transporter complex PhnCDE involved in phosphonates import. Responsible for energy coupling to the transport system. This is Phosphonates import ATP-binding protein PhnC from Bacillus cereus (strain ATCC 10987 / NRS 248).